An 848-amino-acid chain; its full sequence is Translation initiation factor IF-2 (848 aa).

The interval 90–253 (RTYIKRAELQ…PKEKRHAFER (164 aa)) is disordered. Over residues 105 to 170 (EAPAPEEPVQ…SAEPAIAPED (66 aa)) the composition is skewed to low complexity. Composition is skewed to basic residues over residues 204–215 (PKKKQAGHRGPR) and 236–248 (KPLR…KEKR). Residues 344-511 (KRAPVVSVMG…AVLLQAEILE (168 aa)) enclose the tr-type G domain. The segment at 353 to 360 (GHVDHGKT) is G1. 353 to 360 (GHVDHGKT) lines the GTP pocket. The segment at 378 to 382 (GITQH) is G2. The interval 399–402 (DTPG) is G3. Residues 399-403 (DTPGH) and 453-456 (NKMD) contribute to the GTP site. The tract at residues 453–456 (NKMD) is G4. The G5 stretch occupies residues 489–491 (SAH).

Belongs to the TRAFAC class translation factor GTPase superfamily. Classic translation factor GTPase family. IF-2 subfamily.

The protein localises to the cytoplasm. One of the essential components for the initiation of protein synthesis. Protects formylmethionyl-tRNA from spontaneous hydrolysis and promotes its binding to the 30S ribosomal subunits. Also involved in the hydrolysis of GTP during the formation of the 70S ribosomal complex. This is Translation initiation factor IF-2 from Marinobacter nauticus (strain ATCC 700491 / DSM 11845 / VT8) (Marinobacter aquaeolei).